The following is a 449-amino-acid chain: Tubulin alpha chain (449 aa).

Residues Gln-11, Glu-71, Ser-140, Gly-144, Thr-145, Thr-179, Asn-206, and Asn-228 each coordinate GTP. Glu-71 contributes to the Mg(2+) binding site. Residue Glu-254 is part of the active site.

It belongs to the tubulin family. As to quaternary structure, dimer of alpha and beta chains. A typical microtubule is a hollow water-filled tube with an outer diameter of 25 nm and an inner diameter of 15 nM. Alpha-beta heterodimers associate head-to-tail to form protofilaments running lengthwise along the microtubule wall with the beta-tubulin subunit facing the microtubule plus end conferring a structural polarity. Microtubules usually have 13 protofilaments but different protofilament numbers can be found in some organisms and specialized cells. Requires Mg(2+) as cofactor.

Its subcellular location is the cytoplasm. The protein localises to the cytoskeleton. It carries out the reaction GTP + H2O = GDP + phosphate + H(+). In terms of biological role, tubulin is the major constituent of microtubules, a cylinder consisting of laterally associated linear protofilaments composed of alpha- and beta-tubulin heterodimers. Microtubules grow by the addition of GTP-tubulin dimers to the microtubule end, where a stabilizing cap forms. Below the cap, tubulin dimers are in GDP-bound state, owing to GTPase activity of alpha-tubulin. This chain is Tubulin alpha chain (TUBA), found in Sordaria macrospora (strain ATCC MYA-333 / DSM 997 / K(L3346) / K-hell).